Reading from the N-terminus, the 82-residue chain is MQPIPIVAIVALVVAIIIAIVVWSIVIIEYRKILRQRKIDRLIDRLIERAEDSGNESEGEISALVEMGVEMGHHAPWDVDDL.

The Extracellular portion of the chain corresponds to 1-7 (MQPIPIV). The helical transmembrane segment at 8–28 (AIVALVVAIIIAIVVWSIVII) threads the bilayer. Residues 29 to 82 (EYRKILRQRKIDRLIDRLIERAEDSGNESEGEISALVEMGVEMGHHAPWDVDDL) are Cytoplasmic-facing. A phosphoserine; by host CK2 mark is found at serine 53 and serine 57.

Belongs to the HIV-1 VPU protein family. In terms of assembly, homopentamer. Interacts with host CD4 and BRTC; these interactions induce proteasomal degradation of CD4. Interacts (via transmembrane region) with host BST2 (via transmembrane region); this interaction leads to the degradation of host BST2. Interacts with host FBXW11. Interacts with host AP1M1; this interaction plays a role in the mistrafficking and subsequent degradation of host BST2. Interacts with host RANBP2; this interaction allows Vpu to down-regulate host BLM sumoylation. Post-translationally, phosphorylated by host CK2. This phosphorylation is necessary for interaction with human BTRC and degradation of CD4.

The protein resides in the host membrane. With respect to regulation, ion channel activity is inhibited by hexamethylene amiloride in vitro. Its function is as follows. Enhances virion budding by targeting host CD4 and Tetherin/BST2 to proteasome degradation. Degradation of CD4 prevents any unwanted premature interactions between viral Env and its host receptor CD4 in the endoplasmic reticulum. Degradation of antiretroviral protein Tetherin/BST2 is important for virion budding, as BST2 tethers new viral particles to the host cell membrane. Mechanistically, Vpu bridges either CD4 or BST2 to BTRC, a substrate recognition subunit of the Skp1/Cullin/F-box protein E3 ubiquitin ligase, induces their ubiquitination and subsequent proteasomal degradation. The alteration of the E3 ligase specificity by Vpu seems to promote the degradation of host IKBKB, leading to NF-kappa-B down-regulation and subsequent apoptosis. Acts as a viroporin that forms an oligomeric ion channel in membranes. Modulates the host DNA repair mechanisms to promote degradation of nuclear viral cDNA in cells that are already productively infected in order to suppress immune sensing and proviral hyper-integration (superinfection). Manipulates PML-NBs and modulates SUMOylation of host BLM protein thereby enhancing its DNA-end processing activity toward viral unintegrated linear DNA. Also inhibits RAD52-mediated homologous repair of viral cDNA, preventing the generation of dead-end circular forms of single copies of the long terminal repeat and permitting sustained nucleolytic attack. In Human immunodeficiency virus type 1 group M subtype B (isolate HXB2) (HIV-1), this protein is Protein Vpu.